Consider the following 668-residue polypeptide: UvrABC system protein B (668 aa).

One can recognise a Helicase ATP-binding domain in the interval 25–170 (NSILLGNKYQ…FVGQKISIKE (146 aa)). 38 to 45 (GVTGSGKT) contributes to the ATP binding site. Positions 91–114 (YYDYYQPESYVPSKDLFIEKEATI) match the Beta-hairpin motif. In terms of domain architecture, Helicase C-terminal spans 429–595 (QMEDLYSEIQ…TIVKKIQNIL (167 aa)). The UVR domain maps to 622–657 (KKLIDKLKFDLEEAVNDERFEDAIVLRDKIKELSSK).

Belongs to the UvrB family. In terms of assembly, forms a heterotetramer with UvrA during the search for lesions. Interacts with UvrC in an incision complex.

The protein localises to the cytoplasm. Functionally, the UvrABC repair system catalyzes the recognition and processing of DNA lesions. A damage recognition complex composed of 2 UvrA and 2 UvrB subunits scans DNA for abnormalities. Upon binding of the UvrA(2)B(2) complex to a putative damaged site, the DNA wraps around one UvrB monomer. DNA wrap is dependent on ATP binding by UvrB and probably causes local melting of the DNA helix, facilitating insertion of UvrB beta-hairpin between the DNA strands. Then UvrB probes one DNA strand for the presence of a lesion. If a lesion is found the UvrA subunits dissociate and the UvrB-DNA preincision complex is formed. This complex is subsequently bound by UvrC and the second UvrB is released. If no lesion is found, the DNA wraps around the other UvrB subunit that will check the other stand for damage. In Borreliella burgdorferi (strain ZS7) (Borrelia burgdorferi), this protein is UvrABC system protein B.